The following is a 183-amino-acid chain: Segregation and condensation protein B (183 aa).

The protein belongs to the ScpB family. As to quaternary structure, homodimer. Homodimerization may be required to stabilize the binding of ScpA to the Smc head domains. Component of a cohesin-like complex composed of ScpA, ScpB and the Smc homodimer, in which ScpA and ScpB bind to the head domain of Smc. The presence of the three proteins is required for the association of the complex with DNA.

It is found in the cytoplasm. In terms of biological role, participates in chromosomal partition during cell division. May act via the formation of a condensin-like complex containing Smc and ScpA that pull DNA away from mid-cell into both cell halves. In Streptococcus pyogenes serotype M1, this protein is Segregation and condensation protein B.